The primary structure comprises 152 residues: TRAPP-associated protein TCA17 (152 aa).

Belongs to the TRAPP small subunits family. Sedlin subfamily. In terms of assembly, interacts with the TRAPP II complex; TRAPP II subunits TRS33 and TRS65 are required for this interaction.

The protein localises to the golgi apparatus. Its subcellular location is the trans-Golgi network. Functionally, required, together with the TRAPP II subunit TRS33, for TRAPP II complex assembly or stability, and for proper Golgi localization of TRAPP and the Rab GTPase YPT31. This chain is TRAPP-associated protein TCA17 (TCA17), found in Saccharomyces cerevisiae (strain ATCC 204508 / S288c) (Baker's yeast).